The following is a 193-amino-acid chain: RNA polymerase sigma-H factor (193 aa).

Residues 49 to 62 (DVAQEAFIKAYRAL) carry the Polymerase core binding motif. Positions 157 to 176 (YEDIATVMQCPVGTVRSRIF) form a DNA-binding region, H-T-H motif.

Belongs to the sigma-70 factor family. ECF subfamily.

Sigma factors are initiation factors that promote the attachment of RNA polymerase to specific initiation sites and are then released. This sigma factor regulates genes such as algD, involved in alginate biosynthesis. The chain is RNA polymerase sigma-H factor (algU) from Pseudomonas aeruginosa (strain ATCC 15692 / DSM 22644 / CIP 104116 / JCM 14847 / LMG 12228 / 1C / PRS 101 / PAO1).